The chain runs to 243 residues: UPF0246 protein MGAS9429_Spy1799 (243 aa).

This sequence belongs to the UPF0246 family.

This Streptococcus pyogenes serotype M12 (strain MGAS9429) protein is UPF0246 protein MGAS9429_Spy1799.